The sequence spans 668 residues: Tastin (668 aa).

3 disordered regions span residues 1 to 102, 154 to 177, and 189 to 285; these read MTTL…GGSN, ERKG…PRIP, and FSRL…GRHH. A Phosphoserine modification is found at S16. Polar residues-rich tracts occupy residues 27-37 and 55-64; these read QRCQDFSSVKS and PRSTQRQRPL. Residue S97 is modified to Phosphoserine. The segment covering 158-168 has biased composition (polar residues); that stretch reads GTTQRGQSARS. S169 carries the phosphoserine modification. Basic and acidic residues-rich tracts occupy residues 227–246 and 269–282; these read ELRR…DRRT and GEQE…DGGG. S306, S324, and S338 each carry phosphoserine. 2 disordered regions span residues 364–392 and 462–502; these read ITLQ…HQEL and TEPL…AEPE.

Directly binds bystin, and indirectly trophinin.

Its subcellular location is the cytoplasm. Its function is as follows. Could be involved with bystin and trophinin in a cell adhesion molecule complex that mediates an initial attachment of the blastocyst to uterine epithelial cells at the time of the embryo implantation. This Mus musculus (Mouse) protein is Tastin.